The sequence spans 108 residues: Nucleoid-associated protein BTH_I2220 (108 aa).

The protein belongs to the YbaB/EbfC family. Homodimer.

Its subcellular location is the cytoplasm. The protein resides in the nucleoid. Functionally, binds to DNA and alters its conformation. May be involved in regulation of gene expression, nucleoid organization and DNA protection. In Burkholderia thailandensis (strain ATCC 700388 / DSM 13276 / CCUG 48851 / CIP 106301 / E264), this protein is Nucleoid-associated protein BTH_I2220.